A 100-amino-acid chain; its full sequence is MIPMQHGLILAAILFTLGLTGLLIRRNLIFMLISLEVMINSAALAWVVAGSHWGHPDGQIFYLLAITLAAAEASIGLALLLQLYRRHHTLNIDILSEMRG.

Helical transmembrane passes span 4-24 (MQHG…GLLI), 28-48 (LIFM…AWVV), and 60-80 (IFYL…LALL).

Belongs to the complex I subunit 4L family. In terms of assembly, NDH-1 is composed of 13 different subunits. Subunits NuoA, H, J, K, L, M, N constitute the membrane sector of the complex.

It localises to the cell membrane. The catalysed reaction is a quinone + NADH + 5 H(+)(in) = a quinol + NAD(+) + 4 H(+)(out). In terms of biological role, NDH-1 shuttles electrons from NADH, via FMN and iron-sulfur (Fe-S) centers, to quinones in the respiratory chain. The immediate electron acceptor for the enzyme in this species is believed to be ubiquinone. Couples the redox reaction to proton translocation (for every two electrons transferred, four hydrogen ions are translocated across the cytoplasmic membrane), and thus conserves the redox energy in a proton gradient. In Hamiltonella defensa subsp. Acyrthosiphon pisum (strain 5AT), this protein is NADH-quinone oxidoreductase subunit K.